Reading from the N-terminus, the 290-residue chain is Light-independent protochlorophyllide reductase iron-sulfur ATP-binding protein (290 aa).

ATP is bound by residues 10 to 15 (GIGKST) and Lys-39. Ser-14 contributes to the Mg(2+) binding site. [4Fe-4S] cluster-binding residues include Cys-95 and Cys-129. 180-181 (NR) is an ATP binding site.

Belongs to the NifH/BchL/ChlL family. Homodimer. Protochlorophyllide reductase is composed of three subunits; ChlL, ChlN and ChlB. It depends on [4Fe-4S] cluster as a cofactor.

It is found in the plastid. The protein resides in the chloroplast. It carries out the reaction chlorophyllide a + oxidized 2[4Fe-4S]-[ferredoxin] + 2 ADP + 2 phosphate = protochlorophyllide a + reduced 2[4Fe-4S]-[ferredoxin] + 2 ATP + 2 H2O. The protein operates within porphyrin-containing compound metabolism; chlorophyll biosynthesis (light-independent). Its function is as follows. Component of the dark-operative protochlorophyllide reductase (DPOR) that uses Mg-ATP and reduced ferredoxin to reduce ring D of protochlorophyllide (Pchlide) to form chlorophyllide a (Chlide). This reaction is light-independent. The L component serves as a unique electron donor to the NB-component of the complex, and binds Mg-ATP. In Zygnema circumcarinatum (Green alga), this protein is Light-independent protochlorophyllide reductase iron-sulfur ATP-binding protein.